The following is a 320-amino-acid chain: Olfactory receptor 13C8 (320 aa).

At 1–25 (MERTNDSTSTEFFLVGLSAHPKLQT) the chain is on the extracellular side. The N-linked (GlcNAc...) asparagine glycan is linked to Asn-5. The chain crosses the membrane as a helical span at residues 26-46 (VFFVLILWMYLMILLGNGVLI). The Cytoplasmic portion of the chain corresponds to 47–54 (SVIIFDSH). Residues 55 to 75 (LHTPMYFFLCNLSFLDVCYTS) traverse the membrane as a helical segment. Over 76–99 (SSVPLILASFLAVKKKVSFSGCMV) the chain is Extracellular. Cys-97 and Cys-189 are disulfide-bonded. A helical membrane pass occupies residues 100 to 120 (QMFISFAMGATECMILGTMAL). The Cytoplasmic segment spans residues 121–139 (DRYVAICYPLRYPVIMSKG). Residues 140–160 (AYVAMAAGSWVTGLVDSVVQT) form a helical membrane-spanning segment. Over 161–197 (AFAMQLPFCANNVIKHFVCEILAILKLACADISINVI) the chain is Extracellular. The chain crosses the membrane as a helical span at residues 198–217 (SMTGSNLIVLVIPLLVISIS). Over 218–237 (YIFIVATILRIPSTEGKHKA) the chain is Cytoplasmic. Residues 238–258 (FSTCSAHLTVVIIFYGTIFFM) form a helical membrane-spanning segment. Topologically, residues 259–277 (YAKPESKASVDSGNEDIIE) are extracellular. Residues 278–298 (ALISLFYGVMTPMLNPLIYSL) form a helical membrane-spanning segment. At 299-320 (RNKDVKAAVKNILCRKNFSDGK) the chain is on the cytoplasmic side.

Belongs to the G-protein coupled receptor 1 family.

The protein resides in the cell membrane. Odorant receptor. This Homo sapiens (Human) protein is Olfactory receptor 13C8 (OR13C8).